Here is a 396-residue protein sequence, read N- to C-terminus: Elongation factor Tu (396 aa).

Positions 10–206 constitute a tr-type G domain; the sequence is KPHVNIGTIG…AVDAYIPEPE (197 aa). The interval 19 to 26 is G1; the sequence is GHVDHGKT. Position 19–26 (19–26) interacts with GTP; it reads GHVDHGKT. Mg(2+) is bound at residue Thr26. The G2 stretch occupies residues 60 to 64; that stretch reads GITIA. Residues 81 to 84 form a G3 region; sequence DCPG. GTP is bound by residues 81-85 and 136-139; these read DCPGH and NKAD. Residues 136–139 are G4; that stretch reads NKAD. Positions 174-176 are G5; sequence SAL.

The protein belongs to the TRAFAC class translation factor GTPase superfamily. Classic translation factor GTPase family. EF-Tu/EF-1A subfamily. In terms of assembly, monomer.

The protein localises to the cytoplasm. It catalyses the reaction GTP + H2O = GDP + phosphate + H(+). GTP hydrolase that promotes the GTP-dependent binding of aminoacyl-tRNA to the A-site of ribosomes during protein biosynthesis. This is Elongation factor Tu from Geobacter metallireducens (strain ATCC 53774 / DSM 7210 / GS-15).